Consider the following 896-residue polypeptide: Cytokine receptor common subunit beta (896 aa).

Residues 1-22 form the signal peptide; that stretch reads MDQQMALTWGLCYMALVALCWG. At 23–441 the chain is on the extracellular side; the sequence is HGVTEAEETV…SEEYTWKTDW (419 aa). Cysteine 39 and cysteine 49 are disulfide-bonded. A glycan (N-linked (GlcNAc...) asparagine) is linked at asparagine 62. 2 cysteine pairs are disulfide-bonded: cysteine 77–cysteine 99 and cysteine 88–cysteine 94. In terms of domain architecture, Fibronectin type-III 1 spans 136–243; sequence PPLPKNVSIS…PEVHWDSQPG (108 aa). Asparagine 141 is a glycosylation site (N-linked (GlcNAc...) asparagine). Residues 220-233 show a composition bias toward low complexity; it reads SPGSSLSGRPSRWS. The disordered stretch occupies residues 220-243; sequence SPGSSLSGRPSRWSPEVHWDSQPG. Disulfide bonds link cysteine 253–cysteine 263 and cysteine 292–cysteine 310. Positions 343-439 constitute a Fibronectin type-III 2 domain; that stretch reads QMEPPTLNLT…KWSEEYTWKT (97 aa). Asparagine 350 is a glycosylation site (N-linked (GlcNAc...) asparagine). Residues 428–432 carry the WSXWS motif motif; that stretch reads WSKWS. A helical transmembrane segment spans residues 442 to 463; it reads VMPTLWIVLILVFLILTLLLIL. Topologically, residues 464–896 are cytoplasmic; the sequence is RFGCVSVYRT…WDNSQSGKVC (433 aa). A Box 1 motif motif is present at residues 477-485; it reads WKEKIPNPS. Disordered stretches follow at residues 543–620 and 658–725; these read EDPN…GGSL and CGSS…TGPL. 2 stretches are compositionally biased toward polar residues: residues 555–571 and 658–668; these read PDTTPAASSESTEQLPN and CGSSLETSGSP. Positions 716–725 are enriched in low complexity; that stretch reads PVLTLPTGPL. A phosphoserine mark is found at serine 752 and serine 754. The residue at position 765 (tyrosine 765) is a Phosphotyrosine. The disordered stretch occupies residues 771 to 810; the sequence is SVSQAAKSPPGHPAPPVASSPTVIPGEPREEVGPASPHPE.

Belongs to the type I cytokine receptor family. Type 4 subfamily. In terms of assembly, heterodimer of an alpha and a beta subunit. The beta subunit is common to the IL3, IL5 and GM-CSF receptors. The signaling GM-CSF receptor complex is a dodecamer of two head-to-head hexamers of two alpha, two beta, and two ligand subunits. Interacts with TMEM102; this interaction occurs preferentially in the absence of CSF2. Interacts with FCER1G; this interaction is direct. Interacts with LYN. May be phosphorylated by LYN.

Its subcellular location is the membrane. High affinity receptor for interleukin-3, interleukin-5 and granulocyte-macrophage colony-stimulating factor. This Mus musculus (Mouse) protein is Cytokine receptor common subunit beta (Csf2rb).